The sequence spans 582 residues: uncharacterized protein (582 aa).

The segment covering 1-23 (MAHEGSRQVRDRGVTRSKAEKVR) has biased composition (basic and acidic residues). Disordered stretches follow at residues 1 to 29 (MAHEGSRQVRDRGVTRSKAEKVRPPTVPV), 110 to 133 (AVAEDPTWGEDEEPSACTTDSWAQ), and 147 to 221 (LENF…SSAG). Ser-242 bears the Phosphoserine mark. Disordered stretches follow at residues 310-331 (RPSASCQQQRAGHSDVRLSAHH) and 551-582 (LSSGVPEQEDKEGSTFPPVEQHPIQTGAPKPR). A compositionally biased stretch (polar residues) spans 311-320 (PSASCQQQRA).

This is an uncharacterized protein from Homo sapiens (Human).